Consider the following 327-residue polypeptide: MFPSRRKAAQLPWEDGRSGLLSGGLPRKCSVFHLFVACLSLGFFSLLWLQLSCSGDVARAVRGQGQETSGPPRACPPEPPPEHWEEDASWGPHRLAVLVPFRERFEELLVFVPHMRRFLSRKKIRHHIYVLNQVDHFRFNRAALINVGFLESSNSTDYIAMHDVDLLPLNEELDYGFPEAGPFHVASPELHPLYHYKTYVGGILLLSKQHYRLCNGMSNRFWGWGREDDEFYRRIKGAGLQLFRPSGITTGYKTFRHLHDPAWRKRDQKRIAAQKQEQFKVDREGGLNTVKYHVASRTALSVGGAPCTVLNIMLDCDKTATPWCTFS.

At 1 to 30 (MFPSRRKAAQLPWEDGRSGLLSGGLPRKCS) the chain is on the cytoplasmic side. The chain crosses the membrane as a helical; Signal-anchor for type II membrane protein span at residues 31–51 (VFHLFVACLSLGFFSLLWLQL). The Lumenal portion of the chain corresponds to 52 to 327 (SCSGDVARAV…KTATPWCTFS (276 aa)). Residues 63–87 (GQGQETSGPPRACPPEPPPEHWEED) are disordered. UDP-alpha-D-galactose contacts are provided by residues 100–104 (PFRER) and 139–141 (FNR). The N-linked (GlcNAc...) asparagine glycan is linked to Asn-154. UDP-alpha-D-galactose-binding positions include 164–165 (VD), Tyr-194, and Trp-224. A Mn(2+)-binding site is contributed by Asp-165. 226-229 (REDD) contacts N-acetyl-D-glucosamine. Residue His-257 coordinates Mn(2+). UDP-alpha-D-galactose-binding positions include 257–259 (HLH) and Arg-266. A disulfide bridge connects residues Cys-316 and Cys-324.

Belongs to the glycosyltransferase 7 family. It depends on Mn(2+) as a cofactor. High expression in heart, pancreas and liver, medium in placenta and kidney, low in brain, skeletal muscle and lung.

The protein localises to the golgi apparatus. The protein resides in the golgi stack membrane. It carries out the reaction 3-O-(beta-D-xylosyl)-L-seryl-[protein] + UDP-alpha-D-galactose = 3-O-(beta-D-galactosyl-(1-&gt;4)-beta-D-xylosyl)-L-seryl-[protein] + UDP + H(+). Its pathway is protein modification; protein glycosylation. Functionally, required for the biosynthesis of the tetrasaccharide linkage region of proteoglycans, especially for small proteoglycans in skin fibroblasts. This Homo sapiens (Human) protein is Beta-1,4-galactosyltransferase 7 (B4GALT7).